Here is a 331-residue protein sequence, read N- to C-terminus: Geranylgeranyl transferase type-2 subunit beta (331 aa).

Gly-2 carries the N-acetylglycine modification. Thr-3 is subject to Phosphothreonine. PFTB repeat units follow at residues Leu-20–Gly-61, Arg-68–Asp-109, Val-116–Gly-157, Val-164–Ser-205, Ser-212–Gly-253, and Arg-260–Gly-302. His-190–Gly-192 contacts geranylgeranyl diphosphate. Zn(2+)-binding residues include Asp-238 and Cys-240. A geranylgeranyl diphosphate-binding site is contributed by Tyr-241 to Trp-244. Residue His-290 coordinates Zn(2+).

Belongs to the protein prenyltransferase subunit beta family. In terms of assembly, heterotrimer composed of RABGGTA, RABGGTB and CHM; within this trimer, RABGGTA and RABGGTB form the catalytic component B, while CHM (component A) mediates peptide substrate binding. The Rab GGTase dimer (RGGT) interacts with CHM (component A) prior to Rab protein binding; the association is stabilized by geranylgeranyl pyrophosphate (GGpp). The CHM:RGGT:Rab complex is destabilized by GGpp. Interaction of RABGGTB with prenylated PTP4A2 precludes its association with RABGGTA and inhibits enzyme activity. Interacts with CHODL. Interacts with non-phosphorylated form of RAB8A; phosphorylation of RAB8A at 'Thr-72' disrupts this interaction. Zn(2+) is required as a cofactor.

It catalyses the reaction geranylgeranyl diphosphate + L-cysteinyl-[protein] = S-geranylgeranyl-L-cysteinyl-[protein] + diphosphate. The enzymatic reaction requires the aid of a Rab escort protein (also called component A). Catalyzes the transfer of a geranylgeranyl moiety from geranylgeranyl diphosphate to both cysteines of Rab proteins with the C-terminal sequence -XXCC, -XCXC and -CCXX, such as RAB1A, RAB3A, RAB5A and RAB7A. The polypeptide is Geranylgeranyl transferase type-2 subunit beta (RABGGTB) (Homo sapiens (Human)).